The primary structure comprises 394 residues: Mitogen-activated protein kinase 2 (394 aa).

Positions 1-31 (MRMEGGGGGGHGHHGGGGGGHGHHGGIGGGE) are enriched in gly residues. A disordered region spans residues 1–33 (MRMEGGGGGGHGHHGGGGGGHGHHGGIGGGEAQ). The Protein kinase domain maps to 61–347 (VPPIRPVGRG…VDEALCHPYL (287 aa)). Residues 67 to 75 (VGRGACGII) and Lys90 contribute to the ATP site. Asp187 acts as the Proton acceptor in catalysis. Tyr221 bears the Phosphotyrosine mark.

It belongs to the protein kinase superfamily. CMGC Ser/Thr protein kinase family. MAP kinase subfamily. In terms of processing, the phosphorylation on Tyr-221 activates the enzyme. A conserved Thr, which must also be phosphorylated to activate the enzyme in closely related sequences, is replaced by Met-219 in this sequence.

It catalyses the reaction L-seryl-[protein] + ATP = O-phospho-L-seryl-[protein] + ADP + H(+). The catalysed reaction is L-threonyl-[protein] + ATP = O-phospho-L-threonyl-[protein] + ADP + H(+). The chain is Mitogen-activated protein kinase 2 (MPK2) from Oryza sativa subsp. japonica (Rice).